A 171-amino-acid chain; its full sequence is Photosystem I assembly protein Ycf3 (171 aa).

3 TPR repeats span residues 35-68 (AFTYYRDGMSAQAEGEYAEALQNYYEAMRLEVDA), 72-105 (SYILYNIGLIHTSNGEHAKALEYYYQALERNPYL), and 120-153 (GEQAIESGNSRISNLLFDKAADYWKEAIRLAPTN).

It belongs to the Ycf3 family.

The protein localises to the plastid. It is found in the chloroplast thylakoid membrane. Its function is as follows. Essential for the assembly of the photosystem I (PSI) complex. May act as a chaperone-like factor to guide the assembly of the PSI subunits. The chain is Photosystem I assembly protein Ycf3 from Nephroselmis olivacea (Green alga).